Reading from the N-terminus, the 209-residue chain is Holliday junction branch migration complex subunit RuvA (209 aa).

Residues 1–70 (MFSYLKGEAI…EDGTYLYGFA (70 aa)) form a domain I region. Positions 71-149 (SAAARDLFRQ…QWRDQFSLPD (79 aa)) are domain II. Positions 149–153 (DTAAQ) are flexible linker. Residues 154–209 (PNAAVHEDLELTLLALGYQETEIRGAIATLSQDSILLQNDNADEWIRRAITLLSQT) form a domain III region.

Belongs to the RuvA family. Homotetramer. Forms an RuvA(8)-RuvB(12)-Holliday junction (HJ) complex. HJ DNA is sandwiched between 2 RuvA tetramers; dsDNA enters through RuvA and exits via RuvB. An RuvB hexamer assembles on each DNA strand where it exits the tetramer. Each RuvB hexamer is contacted by two RuvA subunits (via domain III) on 2 adjacent RuvB subunits; this complex drives branch migration. In the full resolvosome a probable DNA-RuvA(4)-RuvB(12)-RuvC(2) complex forms which resolves the HJ.

It is found in the cytoplasm. Its function is as follows. The RuvA-RuvB-RuvC complex processes Holliday junction (HJ) DNA during genetic recombination and DNA repair, while the RuvA-RuvB complex plays an important role in the rescue of blocked DNA replication forks via replication fork reversal (RFR). RuvA specifically binds to HJ cruciform DNA, conferring on it an open structure. The RuvB hexamer acts as an ATP-dependent pump, pulling dsDNA into and through the RuvAB complex. HJ branch migration allows RuvC to scan DNA until it finds its consensus sequence, where it cleaves and resolves the cruciform DNA. This is Holliday junction branch migration complex subunit RuvA from Picosynechococcus sp. (strain ATCC 27264 / PCC 7002 / PR-6) (Agmenellum quadruplicatum).